The sequence spans 306 residues: Tyrosine recombinase XerC (306 aa).

Positions 1 to 90 (MYVHIDNFLV…AWRSFYRYLY (90 aa)) constitute a Core-binding (CB) domain. A Tyr recombinase domain is found at 111 to 298 (RLPRFLYEDE…TGERLKKVYR (188 aa)). Residues R151, K175, H250, R253, and H276 contribute to the active site. The O-(3'-phospho-DNA)-tyrosine intermediate role is filled by Y285.

Belongs to the 'phage' integrase family. XerC subfamily. Forms a cyclic heterotetrameric complex composed of two molecules of XerC and two molecules of XerD.

The protein localises to the cytoplasm. Functionally, site-specific tyrosine recombinase, which acts by catalyzing the cutting and rejoining of the recombining DNA molecules. The XerC-XerD complex is essential to convert dimers of the bacterial chromosome into monomers to permit their segregation at cell division. It also contributes to the segregational stability of plasmids. This Pelotomaculum thermopropionicum (strain DSM 13744 / JCM 10971 / SI) protein is Tyrosine recombinase XerC.